A 30-amino-acid polypeptide reads, in one-letter code: Large ribosomal subunit protein bL25 (30 aa).

This sequence belongs to the bacterial ribosomal protein bL25 family. In terms of assembly, part of the 50S ribosomal subunit; part of the 5S rRNA/L5/L18/L25 subcomplex. Contacts the 5S rRNA. Binds to the 5S rRNA independently of L5 and L18.

Functionally, this is one of the proteins that binds to the 5S RNA in the ribosome where it forms part of the central protuberance. The chain is Large ribosomal subunit protein bL25 (rplY) from Anabaena variabilis.